The chain runs to 3603 residues: Plipastatin synthase subunit D (3603 aa).

Residues 7 to 306 form a condensation 1 region; sequence IQDIYPLSYM…NTMPVRVQGA (300 aa). Residues 7–1043 are domain 1 (proline-activating); it reads IQDIYPLSYM…ALIIREAEQN (1037 aa). The tract at residues 490 to 889 is adenylation 1; the sequence is TYRELNKAAN…NHPDISEAAI (400 aa). The region spanning 966–1041 is the Carrier 1 domain; that stretch reads APRNLLEAKL…GLALIIREAE (76 aa). O-(pantetheine 4'-phosphoryl)serine is present on S1001. Positions 1053-1334 are condensation 2; it reads KRDTYPVSSA…NTLALRTRPA (282 aa). Residues 1053-2069 form a domain 2 (glutamine-activating) region; it reads KRDTYPVSSA…TVEGLATVIR (1017 aa). The segment at 1521-1924 is adenylation 2; it reads TYKELNEQAN…SIEGVREAAV (404 aa). Residues 1997–2072 form the Carrier 2 domain; that stretch reads APRNVTEMKL…GLATVIREGT (76 aa). S2032 carries the post-translational modification O-(pantetheine 4'-phosphoryl)serine. Residues 2084–2374 form a condensation 3 region; the sequence is KQETYPVSSA…NTLALRTRPE (291 aa). Residues 2084–3596 are domain 3 (proline-activating); that stretch reads KQETYPVSSA…ELTEDALQEI (1513 aa). The adenylation 3 stretch occupies residues 2560–2956; the sequence is TYQELDEWSN…CIKGVKDAAV (397 aa). Positions 3034–3108 constitute a Carrier 3 domain; it reads PPSSKMEQIL…ELAAYIRDSD (75 aa). S3069 carries the post-translational modification O-(pantetheine 4'-phosphoryl)serine. The segment at 3116–3596 is epimerization; sequence VEGDVQWSPV…ELTEDALQEI (481 aa).

The protein belongs to the ATP-dependent AMP-binding enzyme family. Pantetheine 4'-phosphate is required as a cofactor.

This protein is a multifunctional enzyme, able to activate and polymerize the amino acids Pro, Gln and Tyr as part of the biosynthesis of the lipopeptide antibiotic plipastatin. The Tyr residue is further epimerized to the D-isomer form. The activation sites for these amino acids consist of individual domains. This Bacillus subtilis (strain 168) protein is Plipastatin synthase subunit D (ppsD).